Reading from the N-terminus, the 169-residue chain is Thiol peroxidase (169 aa).

One can recognise a Thioredoxin domain in the interval 19 to 167 (LKVGDRAPEA…YDEVVNKVKE (149 aa)). Cysteine 61 (cysteine sulfenic acid (-SOH) intermediate) is an active-site residue. Cysteine 61 and cysteine 95 are oxidised to a cystine.

This sequence belongs to the peroxiredoxin family. Tpx subfamily. Homodimer.

The enzyme catalyses a hydroperoxide + [thioredoxin]-dithiol = an alcohol + [thioredoxin]-disulfide + H2O. In terms of biological role, thiol-specific peroxidase that catalyzes the reduction of hydrogen peroxide and organic hydroperoxides to water and alcohols, respectively. Plays a role in cell protection against oxidative stress by detoxifying peroxides. The sequence is that of Thiol peroxidase from Aquifex aeolicus (strain VF5).